Here is a 28-residue protein sequence, read N- to C-terminus: Cyclotide vodo I2 (28 aa).

3 disulfide bridges follow: Cys-4–Cys-18, Cys-8–Cys-20, and Cys-13–Cys-25.

This is a cyclic peptide. In terms of processing, contains 3 disulfide bonds.

In terms of biological role, probably participates in a plant defense mechanism. The sequence is that of Cyclotide vodo I2 from Viola odorata (Sweet violet).